The primary structure comprises 286 residues: Phosphatidylglycerol--prolipoprotein diacylglyceryl transferase (286 aa).

Transmembrane regions (helical) follow at residues 24-44, 72-92, 104-124, 140-160, 190-210, 218-238, and 253-273; these read IGPL…LFAW, FIVW…VLFY, IFAV…VILA, FDVV…ANFI, LYEA…LTHS, RFVG…VEFF, and WLTM…WAMA. R155 provides a ligand contact to a 1,2-diacyl-sn-glycero-3-phospho-(1'-sn-glycerol).

It belongs to the Lgt family.

It localises to the cell inner membrane. It catalyses the reaction L-cysteinyl-[prolipoprotein] + a 1,2-diacyl-sn-glycero-3-phospho-(1'-sn-glycerol) = an S-1,2-diacyl-sn-glyceryl-L-cysteinyl-[prolipoprotein] + sn-glycerol 1-phosphate + H(+). It functions in the pathway protein modification; lipoprotein biosynthesis (diacylglyceryl transfer). Functionally, catalyzes the transfer of the diacylglyceryl group from phosphatidylglycerol to the sulfhydryl group of the N-terminal cysteine of a prolipoprotein, the first step in the formation of mature lipoproteins. The polypeptide is Phosphatidylglycerol--prolipoprotein diacylglyceryl transferase (Mesorhizobium japonicum (strain LMG 29417 / CECT 9101 / MAFF 303099) (Mesorhizobium loti (strain MAFF 303099))).